A 475-amino-acid polypeptide reads, in one-letter code: 1-aminocyclopropane-1-carboxylate synthase CMA101 (475 aa).

K272 carries the post-translational modification N6-(pyridoxal phosphate)lysine.

This sequence belongs to the class-I pyridoxal-phosphate-dependent aminotransferase family. As to quaternary structure, homodimer. It depends on pyridoxal 5'-phosphate as a cofactor.

It carries out the reaction S-adenosyl-L-methionine = 1-aminocyclopropane-1-carboxylate + S-methyl-5'-thioadenosine + H(+). The protein operates within alkene biosynthesis; ethylene biosynthesis via S-adenosyl-L-methionine; ethylene from S-adenosyl-L-methionine: step 1/2. Catalyzes the formation of 1-aminocyclopropane-1-carboxylate, a direct precursor of ethylene in higher plants. In Cucurbita maxima (Pumpkin), this protein is 1-aminocyclopropane-1-carboxylate synthase CMA101 (ACS2).